Consider the following 391-residue polypeptide: Alanine racemase (391 aa).

Lys-38 (proton acceptor; specific for D-alanine) is an active-site residue. Lys-38 carries the post-translational modification N6-(pyridoxal phosphate)lysine. Arg-136 lines the substrate pocket. The active-site Proton acceptor; specific for L-alanine is Tyr-267. Met-315 contributes to the substrate binding site.

Belongs to the alanine racemase family. Pyridoxal 5'-phosphate is required as a cofactor.

The catalysed reaction is L-alanine = D-alanine. It participates in amino-acid biosynthesis; D-alanine biosynthesis; D-alanine from L-alanine: step 1/1. Its function is as follows. Catalyzes the interconversion of L-alanine and D-alanine. May also act on other amino acids. In Clostridium kluyveri (strain ATCC 8527 / DSM 555 / NBRC 12016 / NCIMB 10680 / K1), this protein is Alanine racemase (alr).